We begin with the raw amino-acid sequence, 413 residues long: Putative competence-damage inducible protein (413 aa).

Belongs to the CinA family.

This is Putative competence-damage inducible protein from Halothermothrix orenii (strain H 168 / OCM 544 / DSM 9562).